The chain runs to 596 residues: Structural protein precursor VP8 (596 aa).

The protein localises to the virion. 120 subunits of the putative clamp protein VP8b appear to stabilize the capsid shell. The chain is Structural protein precursor VP8 from Oryza latifolia (Indian wild rice).